A 164-amino-acid polypeptide reads, in one-letter code: Phosphopantetheine adenylyltransferase (164 aa).

Residue Ser-9 coordinates substrate. Residues 9 to 10 (SF) and His-17 contribute to the ATP site. 3 residues coordinate substrate: Lys-41, Leu-73, and Arg-87. Residues 88 to 90 (GLR), Glu-98, and 123 to 129 (YTFLSSS) each bind ATP.

Belongs to the bacterial CoaD family. Homohexamer. Mg(2+) is required as a cofactor.

Its subcellular location is the cytoplasm. It carries out the reaction (R)-4'-phosphopantetheine + ATP + H(+) = 3'-dephospho-CoA + diphosphate. Its pathway is cofactor biosynthesis; coenzyme A biosynthesis; CoA from (R)-pantothenate: step 4/5. Functionally, reversibly transfers an adenylyl group from ATP to 4'-phosphopantetheine, yielding dephospho-CoA (dPCoA) and pyrophosphate. This Dictyoglomus thermophilum (strain ATCC 35947 / DSM 3960 / H-6-12) protein is Phosphopantetheine adenylyltransferase.